Consider the following 223-residue polypeptide: Glutathione S-transferase A2 (223 aa).

Position 2 is an N-acetylalanine (A2). The region spanning 3–83 (GKPKLHYFNG…YIATKYNLYG (81 aa)) is the GST N-terminal domain. Position 4 is an N6-succinyllysine (K4). Glutathione contacts are provided by residues Y9, R45, 54 to 55 (QV), and 67 to 68 (QT). One can recognise a GST C-terminal domain in the interval 85-208 (DMKERALIDM…QPGSQRKPPM (124 aa)).

Belongs to the GST superfamily. Alpha family. In terms of assembly, homodimer. Expressed in corpus luteum, adrenal gland, testis, liver, lung, thyroid and kidney.

Its subcellular location is the cytoplasm. The enzyme catalyses RX + glutathione = an S-substituted glutathione + a halide anion + H(+). Functionally, conjugation of reduced glutathione to a wide number of exogenous and endogenous hydrophobic electrophiles. The sequence is that of Glutathione S-transferase A2 (GSTA2) from Bos taurus (Bovine).